The chain runs to 144 residues: Glycine-rich protein HC1 (144 aa).

The chain crosses the membrane as a helical span at residues 5–25 (IFLLLGLSIAFAILISSEVAA). Repeat copies occupy residues 37 to 42 (GYNNGG), 43 to 48 (GYHNGG), 50 to 55 (GYNNGG), 56 to 61 (GYHNGG), 63 to 68 (GYNNGG), 69 to 74 (GYHNGG), 76 to 81 (GYNNGG), 82 to 87 (GYHNGG), 89 to 94 (GYNNGG), 102 to 107 (GYNNGG), and 108 to 113 (GYHGGG). An 11 X 6 AA tandem repeats of G-Y-[NH]-N-G -G region spans residues 37-113 (GYNNGGGYHN…NNGGGYHGGG (77 aa)).

It belongs to the GRP family.

It is found in the membrane. The chain is Glycine-rich protein HC1 from Oxybasis rubra (Red goosefoot).